The chain runs to 1116 residues: Protein translocase subunit SecA (1116 aa).

Residues Q177, 195 to 199 (GEGKT), and D692 contribute to the ATP site.

Belongs to the SecA family. As to quaternary structure, monomer and homodimer. Part of the essential Sec protein translocation apparatus which comprises SecA, SecYEG and auxiliary proteins SecDF. Other proteins may also be involved.

Its subcellular location is the cell inner membrane. It localises to the cytoplasm. The enzyme catalyses ATP + H2O + cellular proteinSide 1 = ADP + phosphate + cellular proteinSide 2.. Functionally, part of the Sec protein translocase complex. Interacts with the SecYEG preprotein conducting channel. Has a central role in coupling the hydrolysis of ATP to the transfer of proteins into and across the cell membrane, serving as an ATP-driven molecular motor driving the stepwise translocation of polypeptide chains across the membrane. This Flavobacterium psychrophilum (strain ATCC 49511 / DSM 21280 / CIP 103535 / JIP02/86) protein is Protein translocase subunit SecA.